The following is an 84-amino-acid chain: Cell division topological specificity factor (84 aa).

Belongs to the MinE family.

Prevents the cell division inhibition by proteins MinC and MinD at internal division sites while permitting inhibition at polar sites. This ensures cell division at the proper site by restricting the formation of a division septum at the midpoint of the long axis of the cell. This Azotobacter vinelandii (strain DJ / ATCC BAA-1303) protein is Cell division topological specificity factor.